The sequence spans 938 residues: Microperfuranone synthase (938 aa).

The interval 44–445 is adenylation (A) domain; it reads TSTRISYAEL…AGRTKDTIIV (402 aa). A Carrier domain is found at 579-655; sequence SDSERAVQKA…AIARSIDSSR (77 aa). Residues 581-652 are thiolation and peptide carrier (T) domain; the sequence is SERAVQKALV…TPGAIARSID (72 aa). An O-(pantetheine 4'-phosphoryl)serine modification is found at serine 613. Residues 676-923 form a thioesterase (TE) domain region; that stretch reads PLFCIHPGSG…AKMLNREHIA (248 aa). Residue serine 746 is part of the active site.

Belongs to the ATP-dependent AMP-binding enzyme family.

It participates in secondary metabolite biosynthesis. Its function is as follows. Microperfuranone synthase is the only protein required for the biosynthesis of the secondary metabolite microperfuranone from phenylpyruvic acid (PPA). Several steps for the microperfuranione biosynthesis have been proposed. These steps include the activation of PPA, by the micA adenylation (A) domain to AMP-phenylpyruvic acid followed by loading of the PPA unit to the thiolation and peptide carrier (T) domain and eventually transferring to the thioesterase (TE) domain. After loading another PPA unit onto the T domain, aldol condensation establishes the carbon-carbon bond between the alpha- and beta-carbon of the two PPA units. Sulfur-assisted furan ring formation, TE domain mediated hydrolysis, decarboxylation, and keto-enol tautomerization would generate microperfuranone attached to the T domain. Finally, microperfuranone is released by the TE domain. This is Microperfuranone synthase from Emericella nidulans (strain FGSC A4 / ATCC 38163 / CBS 112.46 / NRRL 194 / M139) (Aspergillus nidulans).